The chain runs to 322 residues: Probable 5-dehydro-4-deoxyglucarate dehydratase 2 (322 aa).

The protein belongs to the DapA family.

It catalyses the reaction 5-dehydro-4-deoxy-D-glucarate + H(+) = 2,5-dioxopentanoate + CO2 + H2O. Its pathway is carbohydrate acid metabolism; D-glucarate degradation; 2,5-dioxopentanoate from D-glucarate: step 2/2. This chain is Probable 5-dehydro-4-deoxyglucarate dehydratase 2, found in Streptomyces coelicolor (strain ATCC BAA-471 / A3(2) / M145).